The primary structure comprises 107 residues: Nucleoid-associated protein MCA1327 (107 aa).

This sequence belongs to the YbaB/EbfC family. In terms of assembly, homodimer.

Its subcellular location is the cytoplasm. It localises to the nucleoid. Its function is as follows. Binds to DNA and alters its conformation. May be involved in regulation of gene expression, nucleoid organization and DNA protection. This chain is Nucleoid-associated protein MCA1327, found in Methylococcus capsulatus (strain ATCC 33009 / NCIMB 11132 / Bath).